The following is a 100-amino-acid chain: MVPFEYYVALSGLLMVLGFIGVIIRKNIIAMLLSTELMLNAVNIAFVAFDMKLHDVVGQVFVFFILTIAAAEAAIGLGLIIAIYRMKKDVDVEKLTELKG.

A run of 3 helical transmembrane segments spans residues 4–24 (FEYYVALSGLLMVLGFIGVII), 28–48 (IIAMLLSTELMLNAVNIAFVA), and 61–81 (FVFFILTIAAAEAAIGLGLII).

It belongs to the complex I subunit 4L family. NDH-1 is composed of 14 different subunits. Subunits NuoA, H, J, K, L, M, N constitute the membrane sector of the complex.

It is found in the cell inner membrane. The catalysed reaction is a quinone + NADH + 5 H(+)(in) = a quinol + NAD(+) + 4 H(+)(out). Functionally, NDH-1 shuttles electrons from NADH, via FMN and iron-sulfur (Fe-S) centers, to quinones in the respiratory chain. The immediate electron acceptor for the enzyme in this species is believed to be ubiquinone. Couples the redox reaction to proton translocation (for every two electrons transferred, four hydrogen ions are translocated across the cytoplasmic membrane), and thus conserves the redox energy in a proton gradient. The chain is NADH-quinone oxidoreductase subunit K from Sulfurihydrogenibium sp. (strain YO3AOP1).